A 316-amino-acid polypeptide reads, in one-letter code: 2,3-dihydroxyphenylpropionate/2,3-dihydroxicinnamic acid 1,2-dioxygenase (316 aa).

The active-site Proton donor is the histidine 115. Residue histidine 180 is the Proton acceptor of the active site.

This sequence belongs to the LigB/MhpB extradiol dioxygenase family. As to quaternary structure, homotetramer. Fe(2+) is required as a cofactor.

It catalyses the reaction 3-(2,3-dihydroxyphenyl)propanoate + O2 = (2Z,4E)-2-hydroxy-6-oxonona-2,4-dienedioate + H(+). It carries out the reaction (2E)-3-(2,3-dihydroxyphenyl)prop-2-enoate + O2 = (2Z,4E,7E)-2-hydroxy-6-oxonona-2,4,7-trienedioate + H(+). It participates in aromatic compound metabolism; 3-phenylpropanoate degradation. Functionally, catalyzes the non-heme iron(II)-dependent oxidative cleavage of 2,3-dihydroxyphenylpropionic acid and 2,3-dihydroxicinnamic acid into 2-hydroxy-6-ketononadienedioate and 2-hydroxy-6-ketononatrienedioate, respectively. This Rhodococcus rhodochrous protein is 2,3-dihydroxyphenylpropionate/2,3-dihydroxicinnamic acid 1,2-dioxygenase.